Here is a 215-residue protein sequence, read N- to C-terminus: Octanoyltransferase (215 aa).

A BPL/LPL catalytic domain is found at 31-206; that stretch reads TTAPDEIWLV…QLVKHLDYAE (176 aa). Substrate contacts are provided by residues 70-77, 137-139, and 150-152; these read RGGQVTYH, SLG, and GLA. C168 (acyl-thioester intermediate) is an active-site residue.

This sequence belongs to the LipB family.

The protein resides in the cytoplasm. It carries out the reaction octanoyl-[ACP] + L-lysyl-[protein] = N(6)-octanoyl-L-lysyl-[protein] + holo-[ACP] + H(+). Its pathway is protein modification; protein lipoylation via endogenous pathway; protein N(6)-(lipoyl)lysine from octanoyl-[acyl-carrier-protein]: step 1/2. Catalyzes the transfer of endogenously produced octanoic acid from octanoyl-acyl-carrier-protein onto the lipoyl domains of lipoate-dependent enzymes. Lipoyl-ACP can also act as a substrate although octanoyl-ACP is likely to be the physiological substrate. This is Octanoyltransferase from Pseudomonas fluorescens (strain Pf0-1).